Reading from the N-terminus, the 4545-residue chain is Prolow-density lipoprotein receptor-related protein 1 (4545 aa).

Positions 1-19 (MLTPPLLLLLPLLSALVSG) are cleaved as a signal peptide. At 20–4424 (ATMDAPKTCS…SQQQPGHMAS (4405 aa)) the chain is on the extracellular side. 2 consecutive LDL-receptor class A domains span residues 26–67 (KTCS…ICPQ) and 71–111 (QRCP…HCRE). 6 disulfide bridges follow: Cys-28–Cys-41, Cys-35–Cys-54, Cys-48–Cys-65, Cys-73–Cys-86, Cys-80–Cys-99, and Cys-93–Cys-109. The EGF-like 1 domain maps to 112 to 150 (LRANCSRMGCQHHCVPTPSGPTCYCNSSFQLQADGKTCK). Asn-115 carries N-linked (GlcNAc...) asparagine glycosylation. 6 disulfides stabilise this stretch: Cys-116–Cys-125, Cys-121–Cys-134, Cys-136–Cys-149, Cys-155–Cys-165, Cys-161–Cys-174, and Cys-176–Cys-189. The N-linked (GlcNAc...) asparagine glycan is linked to Asn-137. The 40-residue stretch at 151–190 (DFDECSVYGTCSQLCTNTDGSFTCGCVEGYLLQPDNRSCK) folds into the EGF-like 2; calcium-binding domain. Residues Asn-186, Asn-240, and Asn-275 are each glycosylated (N-linked (GlcNAc...) asparagine). LDL-receptor class B repeat units follow at residues 293-335 (GNFY…DPAM), 336-379 (GKVF…DLVS), and 380-423 (RLVY…FENY). The N-linked (GlcNAc...) asparagine glycan is linked to Asn-358. A glycan (N-linked (GlcNAc...) asparagine) is linked at Asn-447. The EGF-like 3 domain maps to 475 to 521 (RSHACENDQYGKPGGCSDICLLANSHKARTCRCRSGFSLGSDGKSCK). 3 disulfides stabilise this stretch: Cys-479–Cys-494, Cys-490–Cys-505, and Cys-507–Cys-520. LDL-receptor class B repeat units lie at residues 572–614 (GFIY…DWMG), 615–660 (DNLY…DPLN), 661–711 (GWMY…DIPA), and 712–755 (GRLY…HGNY). The N-linked (GlcNAc...) asparagine glycan is linked to Asn-730. The EGF-like 4 domain maps to 804 to 844 (GTNKCRVNNGGCSSLCLATPGSRQCACAEDQVLDTDGVTCL). Cystine bridges form between Cys-808–Cys-819, Cys-815–Cys-828, Cys-830–Cys-843, Cys-855–Cys-867, Cys-862–Cys-880, Cys-874–Cys-891, Cys-896–Cys-908, Cys-903–Cys-921, Cys-915–Cys-932, Cys-937–Cys-949, Cys-944–Cys-962, Cys-956–Cys-972, Cys-977–Cys-990, Cys-985–Cys-1003, Cys-997–Cys-1012, Cys-1016–Cys-1028, Cys-1023–Cys-1041, Cys-1035–Cys-1052, Cys-1063–Cys-1076, Cys-1070–Cys-1089, Cys-1083–Cys-1098, Cys-1105–Cys-1119, Cys-1113–Cys-1132, Cys-1126–Cys-1141, Cys-1146–Cys-1160, Cys-1153–Cys-1173, Cys-1167–Cys-1183, Cys-1186–Cys-1197, Cys-1193–Cys-1207, Cys-1209–Cys-1222, Cys-1228–Cys-1238, Cys-1234–Cys-1247, and Cys-1249–Cys-1262. 8 consecutive LDL-receptor class A domains span residues 853-893 (PQCQ…LCHQ), 894-934 (HTCP…TCSA), 935-974 (RTCP…SCAY), 975-1014 (PTCF…GCSH), 1014-1054 (HSCS…NCTN), 1061-1100 (GGCH…SCEG), 1103-1143 (HVCD…NCEA), and 1144-1183 (LACR…GELC). Ca(2+)-binding residues include Trp-872, Asp-875, Asp-877, Asp-879, Asp-885, and Glu-886. An N-linked (GlcNAc...) asparagine glycan is attached at Asn-929. Ca(2+) contacts are provided by Trp-1033, Asp-1036, Asp-1038, Asp-1040, Asp-1046, and Glu-1047. An N-linked (GlcNAc...) asparagine glycan is attached at Asn-1051. Residues Trp-1081, Asp-1084, Asp-1086, Asp-1088, Asp-1094, and Glu-1095 each coordinate Ca(2+). N-linked (GlcNAc...) asparagine glycosylation is found at Asn-1155 and Asn-1156. 2 EGF-like domains span residues 1184–1223 (DQCS…HTCQ) and 1224–1263 (IQSY…ESCR). N-linked (GlcNAc...) asparagine glycosylation is found at Asn-1196 and Asn-1219. LDL-receptor class B repeat units lie at residues 1310–1356 (SALY…DWIA), 1357–1399 (GNIY…DPRD), 1400–1446 (GILF…DYLE), 1447–1491 (KRIL…YGGE), and 1492–1532 (VYWT…YHPS). N-linked (GlcNAc...) asparagine glycosylation is present at Asn-1512. One can recognise an EGF-like 7 domain in the interval 1537 to 1580 (APNPCEANGGRGPCSHLCLINYNRTVSCACPHLMKLHKDNTTCY). 3 cysteine pairs are disulfide-bonded: Cys-1541/Cys-1554, Cys-1550/Cys-1564, and Cys-1566/Cys-1579. Asn-1559, Asn-1576, Asn-1617, and Asn-1646 each carry an N-linked (GlcNAc...) asparagine glycan. LDL-receptor class B repeat units follow at residues 1628–1670 (QRVY…DWVS), 1671–1714 (RNLF…HPLR), 1715–1754 (GKLY…DFPE), and 1755–1799 (SKLY…MGDK). 4 N-linked (GlcNAc...) asparagine glycosylation sites follow: Asn-1724, Asn-1734, Asn-1764, and Asn-1826. One can recognise an EGF-like 8 domain in the interval 1847–1888 (GTNPCSVNNGDCSQLCLPTSETTRSCMCTAGYSLRSGQQACE). 3 disulfides stabilise this stretch: Cys-1851-Cys-1862, Cys-1858-Cys-1872, and Cys-1874-Cys-1887. N-linked (GlcNAc...) asparagine glycosylation is present at Asn-1934. LDL-receptor class B repeat units follow at residues 1935–1977 (DTIY…DWIA), 1978–2020 (GNIY…HPEK), 2021–2064 (GYLF…DYQG), and 2065–2108 (GKLY…FEDF). Asn-1996 carries an N-linked (GlcNAc...) asparagine glycan. An N6-acetyllysine modification is found at Lys-2010. An N-linked (GlcNAc...) asparagine glycan is attached at Asn-2049. Asn-2118 and Asn-2128 each carry an N-linked (GlcNAc...) asparagine glycan. The EGF-like 9 domain maps to 2156–2196 (GTNVCAVANGGCQQLCLYRGGGQRACACAHGMLAEDGASCR). Disulfide bonds link Cys-2160–Cys-2171, Cys-2167–Cys-2181, and Cys-2183–Cys-2195. LDL-receptor class B repeat units follow at residues 2254–2295 (NRIF…HRGW), 2296–2344 (DTLY…DECQ), 2345–2389 (NLMF…DHRA), 2390–2432 (EKLY…YGEH), and 2433–2474 (IFWT…VAND). Asn-2473 carries N-linked (GlcNAc...) asparagine glycosylation. The EGF-like 10 domain maps to 2479-2519 (ELSPCRINNGGCQDLCLLTHQGHVNCSCRGGRILQEDFTCR). 3 disulfides stabilise this stretch: Cys-2483/Cys-2494, Cys-2490/Cys-2504, and Cys-2506/Cys-2518. N-linked (GlcNAc...) asparagine glycosylation occurs at Asn-2503. Asn-2522 is a glycosylation site (N-linked (GlcNAc...) asparagine). 7 consecutive LDL-receptor class A domains span residues 2523-2564 (SSCR…YCNS), 2565-2603 (RRCK…PCNK), 2604-2642 (TACG…NCSA), 2643-2691 (TDCS…DCPG), 2695-2733 (PRCP…HCNK), 2733-2772 (KFCS…HCEG), and 2773-2815 (KTCG…GCLY). 6 disulfide bridges follow: Cys-2525/Cys-2538, Cys-2533/Cys-2551, Cys-2545/Cys-2562, Cys-2567/Cys-2579, Cys-2574/Cys-2592, and Cys-2586/Cys-2601. Asn-2602 carries N-linked (GlcNAc...) asparagine glycosylation. Intrachain disulfides connect Cys-2606/Cys-2618, Cys-2613/Cys-2631, Cys-2625/Cys-2640, Cys-2645/Cys-2667, Cys-2661/Cys-2680, Cys-2674/Cys-2689, Cys-2697/Cys-2709, Cys-2704/Cys-2722, Cys-2716/Cys-2731, Cys-2735/Cys-2747, Cys-2742/Cys-2760, Cys-2754/Cys-2770, Cys-2775/Cys-2788, Cys-2782/Cys-2801, and Cys-2795/Cys-2813. Residues Asn-2621 and Asn-2639 are each glycosylated (N-linked (GlcNAc...) asparagine). Asn-2816 carries an N-linked (GlcNAc...) asparagine glycan. LDL-receptor class A domains are found at residues 2817–2856 (STCD…ECEY), 2857–2900 (PTCG…HCTS), and 2903–2941 (HKCN…RGCH). Intrachain disulfides connect Cys-2819–Cys-2831, Cys-2826–Cys-2844, Cys-2838–Cys-2854, Cys-2859–Cys-2871, Cys-2866–Cys-2885, Cys-2879–Cys-2898, Cys-2905–Cys-2918, Cys-2913–Cys-2931, Cys-2925–Cys-2940, Cys-2945–Cys-2957, Cys-2953–Cys-2966, Cys-2968–Cys-2981, Cys-2987–Cys-2997, Cys-2993–Cys-3006, and Cys-3008–Cys-3022. Residue Asn-2906 is glycosylated (N-linked (GlcNAc...) asparagine). The region spanning 2942–2982 (VNECLSRKLSGCSQDCEDLKIGFKCRCRPGFRLKDDGRTCA) is the EGF-like 11 domain. Positions 2983 to 3023 (DLDECSTTFPCSQLCINTHGSYKCLCVEGYAPRGGDPHSCK) constitute an EGF-like 12; calcium-binding domain. N-linked (GlcNAc...) asparagine glycans are attached at residues Asn-3049 and Asn-3090. LDL-receptor class B repeat units lie at residues 3070–3114 (QMIY…DWVG), 3115–3157 (GNLY…DVQN), 3158–3201 (GYLY…DYVT), 3202–3244 (ERIY…FEDY), and 3245–3285 (VYWT…FHAL). N-linked (GlcNAc...) asparagine glycosylation occurs at Asn-3265. In terms of domain architecture, EGF-like 13 spans 3291–3332 (PNHPCKVNNGGCSNLCLLSPGGGHKCACPTNFYLGGDGRTCV). Intrachain disulfides connect Cys-3295-Cys-3306, Cys-3302-Cys-3316, and Cys-3318-Cys-3331. 11 consecutive LDL-receptor class A domains span residues 3333–3372 (SNCT…DCPE), 3373–3411 (FKCR…NCDI), 3412–3451 (HVCL…DCPE), 3452–3492 (VTCA…NCTQ), 3493–3534 (MTCG…ECDE), 3535–3573 (RTCE…SCTP), 3574–3612 (RPCS…DCTP), 3612–3650 (PRCD…ACGT), 3653–3693 (RTCP…ECAR), 3694–3734 (FICP…DCEP), and 3740–3779 (PHCK…DCSI). An N-linked (GlcNAc...) asparagine glycan is attached at Asn-3334. Intrachain disulfides connect Cys-3335–Cys-3347, Cys-3342–Cys-3360, Cys-3354–Cys-3370, Cys-3375–Cys-3387, Cys-3382–Cys-3400, Cys-3394–Cys-3409, Cys-3414–Cys-3427, Cys-3421–Cys-3440, Cys-3434–Cys-3449, Cys-3454–Cys-3467, Cys-3461–Cys-3480, Cys-3474–Cys-3490, Cys-3495–Cys-3508, Cys-3502–Cys-3521, Cys-3515–Cys-3532, Cys-3537–Cys-3549, Cys-3544–Cys-3562, Cys-3556–Cys-3571, Cys-3576–Cys-3588, Cys-3583–Cys-3601, Cys-3595–Cys-3610, Cys-3614–Cys-3626, Cys-3621–Cys-3639, Cys-3633–Cys-3648, Cys-3655–Cys-3667, Cys-3662–Cys-3680, Cys-3674–Cys-3691, Cys-3696–Cys-3710, Cys-3704–Cys-3723, Cys-3717–Cys-3732, Cys-3742–Cys-3755, Cys-3750–Cys-3768, Cys-3762–Cys-3777, Cys-3786–Cys-3799, Cys-3793–Cys-3808, Cys-3810–Cys-3823, Cys-3829–Cys-3839, Cys-3835–Cys-3848, and Cys-3850–Cys-3861. Asn-3489 carries an N-linked (GlcNAc...) asparagine glycan. N-linked (GlcNAc...) asparagine glycosylation is present at Asn-3663. EGF-like domains are found at residues 3782-3824 (KLTS…PGCQ) and 3825-3862 (DINE…NTCK). Asn-3789 carries an N-linked (GlcNAc...) asparagine glycan. A glycan (N-linked (GlcNAc...) asparagine) is linked at Asn-3840. 4 LDL-receptor class B repeats span residues 3913–3955 (GRVY…HLNI), 3971–4013 (GNVY…DPLR), 4014–4057 (GTMY…DYHN), and 4058–4102 (ERLY…FEDY). Residues 3941 to 3944 (RHRR) carry the Recognition site for proteolytical processing motif. Residue Asn-3954 is glycosylated (N-linked (GlcNAc...) asparagine). 2 N-linked (GlcNAc...) asparagine glycosylation sites follow: Asn-4076 and Asn-4126. EGF-like domains follow at residues 4148–4184 (VTNP…GTCV), 4197–4233 (RPGT…DKCE), 4233–4269 (ELDQ…PKCT), 4269–4305 (TAQV…DRCQ), 4305–4341 (QYRQ…PRCE), 4341–4376 (EVNK…PSCL), and 4374–4410 (SCLT…PRCE). Intrachain disulfides connect Cys-4152–Cys-4161, Cys-4157–Cys-4170, Cys-4172–Cys-4183, Cys-4201–Cys-4211, Cys-4205–Cys-4221, Cys-4223–Cys-4232, Cys-4237–Cys-4247, Cys-4241–Cys-4257, Cys-4259–Cys-4268, Cys-4273–Cys-4283, Cys-4277–Cys-4293, Cys-4295–Cys-4304, Cys-4309–Cys-4319, Cys-4313–Cys-4329, Cys-4331–Cys-4340, Cys-4345–Cys-4353, and Cys-4348–Cys-4364. Residue Asn-4180 is glycosylated (N-linked (GlcNAc...) asparagine). N-linked (GlcNAc...) asparagine glycosylation is found at Asn-4279 and Asn-4280. N-linked (GlcNAc...) asparagine glycosylation is present at Asn-4365. Intrachain disulfides connect Cys-4366/Cys-4375, Cys-4378/Cys-4388, Cys-4382/Cys-4398, and Cys-4400/Cys-4409. The helical transmembrane segment at 4425 to 4445 (ILIPLLLLLLLLLVAGVVFWY) threads the bilayer. Over 4446 to 4545 (KRRVRGAKGF…PEDEIGDPLA (100 aa)) the chain is Cytoplasmic. The segment at 4446–4545 (KRRVRGAKGF…PEDEIGDPLA (100 aa)) is interaction with MAFB. Thr-4461 carries the post-translational modification Phosphothreonine. The NPXY motif signature appears at 4503 to 4508 (FTNPVY). Tyr-4508 bears the Phosphotyrosine mark. Residues Ser-4518, Ser-4521, and Ser-4524 each carry the phosphoserine modification.

The protein belongs to the LDLR family. As to quaternary structure, heterodimer of an 85-kDa membrane-bound carboxyl subunit and a non-covalently attached 515-kDa N-terminal subunit. Intracellular domain interacts with MAFB. Found in a complex with PID1/PCLI1, LRP1 and CUBNI. Interacts with SNX17, PID1/PCLI1, PDGF and CUBN. The intracellular domain interacts with SHC1, GULP1 and DAB1. Can weakly interact (via NPXY motif) with DAB2 (via PID domain); the interaction is enhanced by tyrosine phosphorylation of the NPXY motif. Interacts with MDK; promotes neuronal survival. Interacts with LRPAP1; this interaction is followed by rapid internalization. Interacts with uPA/PLAU and PAI1/SERPINE1, either individually or in complex with each other, leading to rapid endocytosis; this interaction is abolished in the presence of LRPAP1/RAP. Also interacts with tPA/PLAT alone or in complex with SERPINE1. Interacts with the urokinase receptor PLAUR; this interaction leads to PLAUR internalization and is impaired in the presence of SORL1. Interacts with PDGFB. Interacts with TAU/MAPT, leading to endocytosis; this interaction is reduced in the presence of LRPAP1/RAP. Interacts with IGFBP3. Interacts with ADGRG6. In terms of processing, phosphorylated on serine and threonine residues. Post-translationally, phosphorylated on tyrosine residues upon stimulation with PDGF. Tyrosine phosphorylation promotes interaction with SHC1. Cleaved into a 85 kDa membrane-spanning subunit (LRP-85) and a 515 kDa large extracellular domain (LRP-515) that remains non-covalently associated. Gamma-secretase-dependent cleavage of LRP-85 releases the intracellular domain from the membrane.

Its subcellular location is the cell membrane. It is found in the membrane. It localises to the coated pit. The protein resides in the golgi outpost. The protein localises to the cytoplasm. Its subcellular location is the cytoskeleton. It is found in the microtubule organizing center. It localises to the nucleus. Endocytic receptor involved in endocytosis and in phagocytosis of apoptotic cells. Required for early embryonic development. Involved in cellular lipid homeostasis. Involved in the plasma clearance of chylomicron remnants and activated LRPAP1 (alpha 2-macroglobulin), as well as the local metabolism of complexes between plasminogen activators and their endogenous inhibitors. Acts as an alpha-2-macroglobulin receptor. Acts as a TAU/MAPT receptor and controls the endocytosis of TAU/MAPT as well as its subsequent spread. May modulate cellular events, such as APP metabolism, kinase-dependent intracellular signaling, neuronal calcium signaling as well as neurotransmission. Also acts as a receptor for IGFBP3 to mediate cell growth inhibition. In terms of biological role, (Microbial infection) Functions as a receptor for Vibrio cholerae cholix toxin and for Pseudomonas aeruginosa exotoxin A. This is Prolow-density lipoprotein receptor-related protein 1 from Mus musculus (Mouse).